A 179-amino-acid polypeptide reads, in one-letter code: Large ribosomal subunit protein uL5 (179 aa).

The protein belongs to the universal ribosomal protein uL5 family. Part of the 50S ribosomal subunit; part of the 5S rRNA/L5/L18/L25 subcomplex. Contacts the 5S rRNA and the P site tRNA. Forms a bridge to the 30S subunit in the 70S ribosome.

Its function is as follows. This is one of the proteins that bind and probably mediate the attachment of the 5S RNA into the large ribosomal subunit, where it forms part of the central protuberance. In the 70S ribosome it contacts protein S13 of the 30S subunit (bridge B1b), connecting the 2 subunits; this bridge is implicated in subunit movement. Contacts the P site tRNA; the 5S rRNA and some of its associated proteins might help stabilize positioning of ribosome-bound tRNAs. This chain is Large ribosomal subunit protein uL5, found in Chromohalobacter salexigens (strain ATCC BAA-138 / DSM 3043 / CIP 106854 / NCIMB 13768 / 1H11).